The chain runs to 487 residues: MRGSGRSDIVISAVDALDICITLARNDCDKYPGSVAAKLGVSSGLIYLVGQPTINWGDSDQPRPFRQRRYFYYLSGVEEADCYLTYDIKNDLLTLYVPDFDLHRAIWMGPTLTVKEARERYDVDQVRYHASLKGDIQRWADNYNKTSLLYILHDTQKPQVLSNELRLDDELLLPAMDAARGIKDEHEIRMIREANRVSALAHRKVLENVLRMSTEAEIEGLFLDTCISHGAKNQAYEIIAGSGENAAVLHYVKNNEPLQGRQLVCLDAGAEWNCYASDVTRTFPLAADWPTARARDIYQLVEEMQEECIKRIQKGVRFLDLQVLAHVIAIEGLMRLGILKGGSVEEIRESGASTVFFPHGLGHHVGLEVHDVSAKRLTAVEGDKEYYSSILVPSMSHCPCTLSAPLLEEGMVVTVEPGIYFSRLALANARKLAFAKYINFDEAEKYIPIGGVRIEDDILVTSSGHENLTTAPKGEEMLEIIRRGIDS.

4 residues coordinate Mn(2+): Asp267, Asp278, Glu416, and Glu455.

This sequence belongs to the peptidase M24B family. Mn(2+) is required as a cofactor.

It carries out the reaction Release of any N-terminal amino acid, including proline, that is linked to proline, even from a dipeptide or tripeptide.. Functionally, catalyzes the removal of a penultimate prolyl residue from the N-termini of peptides. This is Probable Xaa-Pro aminopeptidase AFUB_014460 from Aspergillus fumigatus (strain CBS 144.89 / FGSC A1163 / CEA10) (Neosartorya fumigata).